An 868-amino-acid chain; its full sequence is Protein translocase subunit SecA (868 aa).

Residues Gln87, 105-109, and Asp500 contribute to the ATP site; that span reads GEGKT. The Zn(2+) site is built by Cys849, Cys851, Cys860, and His861.

It belongs to the SecA family. Monomer and homodimer. Part of the essential Sec protein translocation apparatus which comprises SecA, SecYEG and auxiliary proteins SecDF-YajC and YidC. Requires Zn(2+) as cofactor.

It is found in the cell membrane. The protein localises to the cytoplasm. The catalysed reaction is ATP + H2O + cellular proteinSide 1 = ADP + phosphate + cellular proteinSide 2.. Part of the Sec protein translocase complex. Interacts with the SecYEG preprotein conducting channel. Has a central role in coupling the hydrolysis of ATP to the transfer of proteins into and across the cell membrane, serving both as a receptor for the preprotein-SecB complex and as an ATP-driven molecular motor driving the stepwise translocation of polypeptide chains across the membrane. This is Protein translocase subunit SecA from Wolbachia pipientis wMel.